The primary structure comprises 265 residues: Mlc titration factor A (265 aa).

Positions 111, 148, 152, and 211 each coordinate Zn(2+).

The protein belongs to the MtfA family. As to quaternary structure, interacts with Mlc. Zn(2+) is required as a cofactor.

It is found in the cytoplasm. Functionally, involved in the modulation of the activity of the glucose-phosphotransferase system (glucose-PTS). Interacts with the transcriptional repressor Mlc, preventing its interaction with DNA and leading to the modulation of expression of genes regulated by Mlc, including ptsG, which encodes the PTS system glucose-specific EIICB component. In terms of biological role, shows zinc-dependent metallopeptidase activity. This is Mlc titration factor A from Escherichia coli O6:K15:H31 (strain 536 / UPEC).